We begin with the raw amino-acid sequence, 239 residues long: Ribosomal RNA small subunit methyltransferase G (239 aa).

S-adenosyl-L-methionine-binding positions include glycine 76, phenylalanine 81, 99–101 (DSS), 128–129 (IE), and arginine 147.

Belongs to the methyltransferase superfamily. RNA methyltransferase RsmG family.

It localises to the cytoplasm. In terms of biological role, specifically methylates the N7 position of a guanine in 16S rRNA. In Prochlorococcus marinus subsp. pastoris (strain CCMP1986 / NIES-2087 / MED4), this protein is Ribosomal RNA small subunit methyltransferase G.